The following is a 134-amino-acid chain: Crustacean hyperglycemic hormones isoform B (134 aa).

The first 24 residues, 1 to 24, serve as a signal peptide directing secretion; sequence MFACRTLCLVVVMVASLGTSGVGG. A Pyrrolidone carboxylic acid modification is found at Q61. F63 is modified (D-phenylalanine; in form CHH-B-II). Disulfide bonds link C67–C103, C83–C99, and C86–C112. The residue at position 132 (V132) is a Valine amide.

Belongs to the arthropod CHH/MIH/GIH/VIH hormone family. Stereoinversion of L-Phe (form CHH-B-I) to D-Phe (form CHH-B-II). As to expression, produced by the medulla terminalis X-organ in the eyestalks and transported to the sinus gland where they are stored and released. Present also in the ventral nervous system.

The protein resides in the secreted. Hormone found in the sinus gland of isopods and decapods which controls the blood sugar level. Has a secretagogue action over the amylase released from the midgut gland. May act as a stress hormone and may be involved in the control of molting and reproduction. The sequence is that of Crustacean hyperglycemic hormones isoform B from Homarus americanus (American lobster).